The following is a 268-amino-acid chain: uncharacterized protein (268 aa).

This is an uncharacterized protein from Haemophilus influenzae (strain ATCC 51907 / DSM 11121 / KW20 / Rd).